The primary structure comprises 146 residues: MTMRSLLRTPFLCGLLWAFCAPGARAEEPAASFSQPGSMGLDKNTVHDQEHIMEHLEGVINKPEAEMSPQELQLHYFKMHDYDGNNLLDGLELSTAITHVHKEEGSEQAPLMSEDELINIIDGVLRDDDKNNDGYIDYAEFAKSLQ.

Residues M1–A26 form the signal peptide. Positions S68 to E103 constitute an EF-hand 1 domain. Residues D81, D83, N85, and E92 each contribute to the Ca(2+) site. Phosphoserine is present on S106. An EF-hand 2 domain is found at E116–Q146. 5 residues coordinate Ca(2+): D129, N131, D133, Y135, and E140.

Interacts in a calcium-dependent manner with LMAN1.

Its subcellular location is the endoplasmic reticulum-Golgi intermediate compartment. It is found in the endoplasmic reticulum. The protein resides in the golgi apparatus. Functionally, the MCFD2-LMAN1 complex forms a specific cargo receptor for the ER-to-Golgi transport of selected proteins. Plays a role in the secretion of coagulation factors. The polypeptide is Multiple coagulation factor deficiency protein 2 (MCFD2) (Homo sapiens (Human)).